The primary structure comprises 428 residues: Bifunctional IPC transferase and DIPP synthase (428 aa).

The segment at 2–227 (VETAVILAGG…KAKKYLVKTA (226 aa)) is mobA-like NTP transferase. CTP contacts are provided by residues 8–10 (LAG), lysine 25, glutamate 80, and glutamate 116. Position 116 (glutamate 116) interacts with Mg(2+). A CDP-alcohol phosphatidyltransferases region spans residues 228 to 425 (IKGVGDGFIS…LTIYLVWKKK (198 aa)). Helical transmembrane passes span 266 to 286 (FLLGMFSALVAYFSPALGGIL), 336 to 356 (PSWDFMPWVFAALFGSVMVSY), and 389 to 409 (MIMIFTILGWIKALFVVLAII).

This sequence in the N-terminal section; belongs to the MobA family. In the C-terminal section; belongs to the CDP-alcohol phosphatidyltransferase class-I family. The cofactor is Mg(2+).

It is found in the membrane. The enzyme catalyses 1D-myo-inositol 3-phosphate + CTP + H(+) = CDP-1L-myo-inositol + diphosphate. The catalysed reaction is CDP-1L-myo-inositol + 1D-myo-inositol 3-phosphate = bis(1L-myo-inositol) 3,1'-phosphate 1-phosphate + CMP + H(+). In terms of biological role, involved in biosynthesis of di-myo-inositol phosphate (DIP), a widespread organic solute in microorganisms adapted to hot environments. Catalyzes the condensation of CTP and L-myo-inositol-1-phosphate into CDP-L-myo-inositol, as well as the biosynthesis of di-myo-inositol-1,3'-phosphate-1'-phosphate (DIPP) from CDP-L-myo-inositol and L-myo-inositol-1-phosphate. This chain is Bifunctional IPC transferase and DIPP synthase (spsI), found in Aquifex aeolicus (strain VF5).